The sequence spans 122 residues: Large ribosomal subunit protein uL18 (122 aa).

This sequence belongs to the universal ribosomal protein uL18 family. Part of the 50S ribosomal subunit; part of the 5S rRNA/L5/L18/L25 subcomplex. Contacts the 5S and 23S rRNAs.

Functionally, this is one of the proteins that bind and probably mediate the attachment of the 5S RNA into the large ribosomal subunit, where it forms part of the central protuberance. The protein is Large ribosomal subunit protein uL18 of Thermotoga neapolitana (strain ATCC 49049 / DSM 4359 / NBRC 107923 / NS-E).